Reading from the N-terminus, the 60-residue chain is UPF0434 protein Rfer_3156 (60 aa).

This sequence belongs to the UPF0434 family.

This chain is UPF0434 protein Rfer_3156, found in Albidiferax ferrireducens (strain ATCC BAA-621 / DSM 15236 / T118) (Rhodoferax ferrireducens).